The following is a 703-amino-acid chain: NADH-quinone oxidoreductase chain 12 (703 aa).

16 helical membrane-spanning segments follow: residues 4-24, 30-50, 79-99, 116-136, 138-158, 179-199, 224-244, 256-276, 290-310, 325-345, 346-366, 381-401, 415-435, 475-495, 580-600, and 679-699; these read FVLF…RAIG, YLTT…FLSF, LTAI…MYSL, ARFF…VTAD, LLQM…LIGF, GDFG…SVQF, ANLL…QLLL, TPVS…FLVC, NFIV…GLVQ, LGYM…FHLL, THAF…HAMH, IPLT…VGIP, AIIE…VIAA, LGVL…PFFG, VSPF…YIAN, and LFHY…WVMM.

This sequence belongs to the complex I subunit 5 family. In terms of assembly, NDH-1 is composed of at least 14 different subunits, Nqo1 to Nqo14. The complex has a L-shaped structure, with the hydrophobic arm (subunits Nqo7, Nqo8, Nqo10 to Nqo14) embedded in the inner membrane and the hydrophilic peripheral arm (subunits Nqo1 to Nqo6, Nqo9) protruding into the bacterial cytoplasm. The hydrophilic domain contains all the redox centers.

Its subcellular location is the cell inner membrane. It catalyses the reaction a quinone + NADH + 5 H(+)(in) = a quinol + NAD(+) + 4 H(+)(out). Its function is as follows. NDH-1 shuttles electrons from NADH, via FMN and iron-sulfur (Fe-S) centers, to quinones in the respiratory chain. The immediate electron acceptor for the enzyme in this species is believed to be ubiquinone. Couples the redox reaction to proton translocation (for every two electrons transferred, four hydrogen ions are translocated across the cytoplasmic membrane), and thus conserves the redox energy in a proton gradient. The chain is NADH-quinone oxidoreductase chain 12 from Paracoccus denitrificans.